The primary structure comprises 397 residues: Tryptophan synthase beta chain (397 aa).

K91 carries the N6-(pyridoxal phosphate)lysine modification.

This sequence belongs to the TrpB family. In terms of assembly, tetramer of two alpha and two beta chains. Requires pyridoxal 5'-phosphate as cofactor.

It carries out the reaction (1S,2R)-1-C-(indol-3-yl)glycerol 3-phosphate + L-serine = D-glyceraldehyde 3-phosphate + L-tryptophan + H2O. It participates in amino-acid biosynthesis; L-tryptophan biosynthesis; L-tryptophan from chorismate: step 5/5. Its function is as follows. The beta subunit is responsible for the synthesis of L-tryptophan from indole and L-serine. The chain is Tryptophan synthase beta chain from Bacillus cereus (strain ZK / E33L).